A 446-amino-acid polypeptide reads, in one-letter code: T-box transcription factor TBX20 (446 aa).

Residues 50–80 (SCHPNLGDLPPLETHSDFSSGGGTGSGAPLC) are disordered. The segment at residues 108–287 (LWDKFHELGT…SNPFAKGFRD (180 aa)) is a DNA-binding region (T-box).

The protein resides in the nucleus. Functionally, transcriptional regulator that may play a very early role in the differentiation of the cardiac precursors. This is T-box transcription factor TBX20 (tbx20) from Danio rerio (Zebrafish).